We begin with the raw amino-acid sequence, 208 residues long: Large ribosomal subunit protein uL4 (208 aa).

The interval 45-95 (RQGTHKAKTRSEVRGGGKKPFRQKGTGNARQGSSRSPIHVGGGTIFGPQPH) is disordered. Over residues 69-80 (GTGNARQGSSRS) the composition is skewed to polar residues.

This sequence belongs to the universal ribosomal protein uL4 family. In terms of assembly, part of the 50S ribosomal subunit.

Functionally, one of the primary rRNA binding proteins, this protein initially binds near the 5'-end of the 23S rRNA. It is important during the early stages of 50S assembly. It makes multiple contacts with different domains of the 23S rRNA in the assembled 50S subunit and ribosome. In terms of biological role, forms part of the polypeptide exit tunnel. The protein is Large ribosomal subunit protein uL4 of Chlorobium chlorochromatii (strain CaD3).